Consider the following 648-residue polypeptide: Acetyl-coenzyme A synthetase (648 aa).

Residues 191–194, Thr-310, and Asn-334 each bind CoA; that span reads RGGR. ATP-binding positions include 386 to 388, 410 to 415, Asp-499, and Arg-514; these read GEP and DTWWQT. Ser-522 contacts CoA. Arg-525 serves as a coordination point for ATP. Residues Val-536, His-538, and Ile-541 each coordinate Mg(2+). Position 583 (Arg-583) interacts with CoA. An N6-acetyllysine modification is found at Lys-608.

This sequence belongs to the ATP-dependent AMP-binding enzyme family. Requires Mg(2+) as cofactor. Post-translationally, acetylated. Deacetylation by the SIR2-homolog deacetylase activates the enzyme.

It carries out the reaction acetate + ATP + CoA = acetyl-CoA + AMP + diphosphate. Functionally, catalyzes the conversion of acetate into acetyl-CoA (AcCoA), an essential intermediate at the junction of anabolic and catabolic pathways. AcsA undergoes a two-step reaction. In the first half reaction, AcsA combines acetate with ATP to form acetyl-adenylate (AcAMP) intermediate. In the second half reaction, it can then transfer the acetyl group from AcAMP to the sulfhydryl group of CoA, forming the product AcCoA. In Aeromonas salmonicida (strain A449), this protein is Acetyl-coenzyme A synthetase.